A 453-amino-acid polypeptide reads, in one-letter code: Charged multivesicular body protein 7 (453 aa).

Residues 1–22 (MWSPEREAEAPAGGDPAGLLPP) are disordered. Residues 10–22 (APAGGDPAGLLPP) show a composition bias toward low complexity. Ser-232 carries the phosphoserine modification. The stretch at 243–312 (QLMQSEQLLS…DTVQGILDRI (70 aa)) forms a coiled coil. Basic and acidic residues predominate over residues 392–403 (TKEPLDLPDNPR). Disordered regions lie at residues 392–417 (TKEP…PRIS) and 431–453 (SEGG…LKPL). Thr-408 carries the phosphothreonine modification. A phosphoserine mark is found at Ser-410, Ser-417, Ser-431, and Ser-441.

It belongs to the SNF7 family. In terms of assembly, interacts with CHMP4B, but not with VPS25. Interacts with LEMD2 (via C-terminus).

The protein resides in the cytoplasm. Its subcellular location is the nucleus envelope. Its function is as follows. ESCRT-III-like protein required to recruit the ESCRT-III complex to the nuclear envelope (NE) during late anaphase. Together with SPAST, the ESCRT-III complex promotes NE sealing and mitotic spindle disassembly during late anaphase. Recruited to the reforming NE during anaphase by LEMD2. Plays a role in the endosomal sorting pathway. The sequence is that of Charged multivesicular body protein 7 (CHMP7) from Homo sapiens (Human).